The primary structure comprises 416 residues: Transcription factor IIIB 50 kDa subunit (416 aa).

The TFIIB-type zinc-finger motif lies at 3-36 (NGSRCPDCGSSELVEDSHYSQSQLVCSDCGCVVT). Zn(2+) contacts are provided by C7, C10, C28, and C31. 2 repeat units span residues 72 to 157 (DLRR…MQIV) and 173 to 249 (VKSY…SLAR). Residues 108–114 (AARLQKK) are interaction with target DNA. The segment at 317–385 (AEVETKQQQP…TGDEDISDSE (69 aa)) is disordered. S350 carries the post-translational modification Phosphoserine. A required for the formation of a ternary complex with DNA and TBP; not required for interaction with TBP in the absence of DNA region spans residues 354 to 360 (LLPPCML). C358 bears the Cysteine sulfenic acid (-SOH) mark. The tract at residues 362–416 (PPKRTHTMPPDSVVTGDEDISDSEIEQYLRTPQEVRDFERAQAASRAAMSVPNPP) is required for interaction with TBP and formation of a ternary complex with DNA and TBP.

It belongs to the TFIIB family. Component of TFIIIB complexes. The TFIIIB complex has two activities, alpha and beta. The TFIIIB-alpha activity complex is composed of TBP, BDP1, and a complex containing both BRF2 and at least four stably associated proteins; this complex inhibits the transcription by pol III via its phosphorylation by CK2; YY1 facilitates the TFIIIB-alpha complex formation. Interacts with TBP; this interaction promotes recruitment of BRF2 to TATA box-containing promoters. Interacts with TBP and the BURE sequence (GC-rich sequence downstream from the TATA box) to form a strong ternary complex which is joined by BDP1; this ternary complex stimulates pol III transcription. Forms a trimeric complex composed of TBP, BRF2 and mini-SNAPc complex (SNAP43, SNAP50, and the N-terminal third of SNAP190) on the promoter. Assembly of the TBP-BRF2 complex is stimulated by SNAP190. Interacts with MAF1 and SNAPC4. Post-translationally, in response to oxidative stress, Cys-358 is reversibly oxidized to cysteine sulfenic acid. Oxidation of Cys-358 impairs formation of a ternary complex with TBP and DNA and down-regulates expression of target genes in response to oxidative stress.

It is found in the nucleus. Functionally, general activator of RNA polymerase III transcription. Factor exclusively required for RNA polymerase III transcription of genes with promoter elements upstream of the initiation sites. Contributes to the regulation of gene expression; functions as activator in the absence of oxidative stress. Down-regulates expression of target genes in response to oxidative stress. Overexpression protects cells against apoptosis in response to oxidative stress. This chain is Transcription factor IIIB 50 kDa subunit (Brf2), found in Rattus norvegicus (Rat).